The chain runs to 464 residues: 3-deoxy-D-manno-octulosonic acid transferase (464 aa).

The helical; Signal-anchor transmembrane segment at 2 to 22 threads the bilayer; sequence MLLYYALSFILLPVYFIIILI. Residues 47–93 enclose the RPE1 insert domain; that stretch reads DSLDFMQTSANKEEFKGDTSLRTTTYTLIREDEGLGSTYKLPLEASD. The active-site Proton acceptor is glutamate 107. CMP contacts are provided by residues 311–312, 352–354, and 377–380; these read PR, FGE, and NILE.

The protein belongs to the glycosyltransferase group 1 family. Glycosyltransferase 30 subfamily.

It localises to the cell inner membrane. It carries out the reaction lipid IVA (E. coli) + CMP-3-deoxy-beta-D-manno-octulosonate = alpha-Kdo-(2-&gt;6)-lipid IVA (E. coli) + CMP + H(+). The protein operates within bacterial outer membrane biogenesis; LPS core biosynthesis. Its function is as follows. Involved in lipopolysaccharide (LPS) biosynthesis. Catalyzes the transfer of 3-deoxy-D-manno-octulosonate (Kdo) residue(s) from CMP-Kdo to lipid IV(A), the tetraacyldisaccharide-1,4'-bisphosphate precursor of lipid A. This Rickettsia conorii (strain ATCC VR-613 / Malish 7) protein is 3-deoxy-D-manno-octulosonic acid transferase (waaA).